Consider the following 456-residue polypeptide: Bifunctional protein GlmU (456 aa).

Residues 1–229 (MSNSAMSVVI…LSEVEGVNNR (229 aa)) form a pyrophosphorylase region. UDP-N-acetyl-alpha-D-glucosamine is bound by residues 11–14 (LAAG), Lys25, Gln76, 81–82 (GT), 103–105 (YGD), Gly140, Glu154, Asn169, and Asn227. Asp105 serves as a coordination point for Mg(2+). Asn227 contacts Mg(2+). The segment at 230–250 (LQLSALERVYQREQADRLLLA) is linker. Positions 251 to 456 (GVMLLDPARF…SGWQRPVKKK (206 aa)) are N-acetyltransferase. Arg333 and Lys351 together coordinate UDP-N-acetyl-alpha-D-glucosamine. Residue His363 is the Proton acceptor of the active site. The UDP-N-acetyl-alpha-D-glucosamine site is built by Tyr366 and Asn377. Residues Ala380, 386-387 (NY), Ser405, Ala423, and Arg440 each bind acetyl-CoA.

The protein in the N-terminal section; belongs to the N-acetylglucosamine-1-phosphate uridyltransferase family. In the C-terminal section; belongs to the transferase hexapeptide repeat family. As to quaternary structure, homotrimer. It depends on Mg(2+) as a cofactor.

The protein localises to the cytoplasm. The enzyme catalyses alpha-D-glucosamine 1-phosphate + acetyl-CoA = N-acetyl-alpha-D-glucosamine 1-phosphate + CoA + H(+). It carries out the reaction N-acetyl-alpha-D-glucosamine 1-phosphate + UTP + H(+) = UDP-N-acetyl-alpha-D-glucosamine + diphosphate. It functions in the pathway nucleotide-sugar biosynthesis; UDP-N-acetyl-alpha-D-glucosamine biosynthesis; N-acetyl-alpha-D-glucosamine 1-phosphate from alpha-D-glucosamine 6-phosphate (route II): step 2/2. It participates in nucleotide-sugar biosynthesis; UDP-N-acetyl-alpha-D-glucosamine biosynthesis; UDP-N-acetyl-alpha-D-glucosamine from N-acetyl-alpha-D-glucosamine 1-phosphate: step 1/1. The protein operates within bacterial outer membrane biogenesis; LPS lipid A biosynthesis. Its function is as follows. Catalyzes the last two sequential reactions in the de novo biosynthetic pathway for UDP-N-acetylglucosamine (UDP-GlcNAc). The C-terminal domain catalyzes the transfer of acetyl group from acetyl coenzyme A to glucosamine-1-phosphate (GlcN-1-P) to produce N-acetylglucosamine-1-phosphate (GlcNAc-1-P), which is converted into UDP-GlcNAc by the transfer of uridine 5-monophosphate (from uridine 5-triphosphate), a reaction catalyzed by the N-terminal domain. The polypeptide is Bifunctional protein GlmU (Pectobacterium carotovorum subsp. carotovorum (strain PC1)).